Here is a 1402-residue protein sequence, read N- to C-terminus: DNA-directed RNA polymerase subunit beta' (1402 aa).

Cysteine 71, cysteine 73, cysteine 86, and cysteine 89 together coordinate Zn(2+). The Mg(2+) site is built by aspartate 462, aspartate 464, and aspartate 466. Cysteine 811, cysteine 885, cysteine 892, and cysteine 895 together coordinate Zn(2+). The tract at residues 1379-1402 (RKGTGAGSANQMLQDMTDQVPAAE) is disordered. Residues 1385 to 1395 (GSANQMLQDMT) show a composition bias toward polar residues.

Belongs to the RNA polymerase beta' chain family. As to quaternary structure, the RNAP catalytic core consists of 2 alpha, 1 beta, 1 beta' and 1 omega subunit. When a sigma factor is associated with the core the holoenzyme is formed, which can initiate transcription. The cofactor is Mg(2+). It depends on Zn(2+) as a cofactor.

The catalysed reaction is RNA(n) + a ribonucleoside 5'-triphosphate = RNA(n+1) + diphosphate. Functionally, DNA-dependent RNA polymerase catalyzes the transcription of DNA into RNA using the four ribonucleoside triphosphates as substrates. This chain is DNA-directed RNA polymerase subunit beta', found in Agrobacterium fabrum (strain C58 / ATCC 33970) (Agrobacterium tumefaciens (strain C58)).